A 750-amino-acid chain; its full sequence is Coiled-coil domain-containing protein 142 (750 aa).

Residues 1-29 (MAQASRSGSLPPLVIVPPLRAQPGGTGEE) are disordered. Positions 87–110 (ALQRLRAVLLRLHREREQLLQARD) form a coiled coil. Positions 687 to 714 (LEPPLQPGTSPAQTGQLQSTLGGRGPSP) are disordered. Polar residues predominate over residues 693 to 707 (PGTSPAQTGQLQSTL).

The sequence is that of Coiled-coil domain-containing protein 142 (CCDC142) from Homo sapiens (Human).